The chain runs to 388 residues: Salivary protein Tsal2A (388 aa).

Positions 1-18 are cleaved as a signal peptide; sequence MSLLYGLLILAFTRSCLV. N-linked (GlcNAc...) asparagine glycosylation occurs at N260.

Belongs to the DNA/RNA non-specific endonuclease family. A divalent metal cation is required as a cofactor. In terms of tissue distribution, saliva (at protein level).

Its subcellular location is the secreted. Binds double-stranded DNA (dsDNA) with high affinity. Binds double-stranded RNA. Binds single-stranded DNA with lower affinity and with a preference for purine-rich sequences. Shows residual nuclease activity for dsDNA. Facilitates blood meal intake by lowering the local viscosity created by the release of host DNA. This is Salivary protein Tsal2A from Glossina morsitans morsitans (Savannah tsetse fly).